Consider the following 97-residue polypeptide: Eclosion hormone (97 aa).

The signal sequence occupies residues 1 to 17 (MNCKPLILCTFVAVAMC). Cystine bridges form between Cys48–Cys72, Cys52–Cys68, and Cys55–Cys83.

This sequence belongs to the insect eclosion hormone family. As to expression, expressed in a single pair of brain neurons which extend their processes the entire length of the central nervous system and also to the corpora cardiaca portion of the ring gland. These cells show massive depletion of immunoreactive Eh at ecdysis.

It is found in the secreted. Neuropeptide that triggers the performance of ecdysis behaviors at the end of a molt. It triggers adult behavior patterns: larval, pupal and adult ecdysis, and plasticization during the molt. This Drosophila melanogaster (Fruit fly) protein is Eclosion hormone (Eh).